Reading from the N-terminus, the 364-residue chain is UDP-N-acetylglucosamine--N-acetylmuramyl-(pentapeptide) pyrophosphoryl-undecaprenol N-acetylglucosamine transferase (364 aa).

Residues 12-14, Asn-124, Arg-167, Ser-195, Ile-249, 268-273, and Gln-294 each bind UDP-N-acetyl-alpha-D-glucosamine; these read TGG and ALTVSE.

The protein belongs to the glycosyltransferase 28 family. MurG subfamily.

The protein resides in the cell inner membrane. It carries out the reaction di-trans,octa-cis-undecaprenyl diphospho-N-acetyl-alpha-D-muramoyl-L-alanyl-D-glutamyl-meso-2,6-diaminopimeloyl-D-alanyl-D-alanine + UDP-N-acetyl-alpha-D-glucosamine = di-trans,octa-cis-undecaprenyl diphospho-[N-acetyl-alpha-D-glucosaminyl-(1-&gt;4)]-N-acetyl-alpha-D-muramoyl-L-alanyl-D-glutamyl-meso-2,6-diaminopimeloyl-D-alanyl-D-alanine + UDP + H(+). Its pathway is cell wall biogenesis; peptidoglycan biosynthesis. Its function is as follows. Cell wall formation. Catalyzes the transfer of a GlcNAc subunit on undecaprenyl-pyrophosphoryl-MurNAc-pentapeptide (lipid intermediate I) to form undecaprenyl-pyrophosphoryl-MurNAc-(pentapeptide)GlcNAc (lipid intermediate II). The protein is UDP-N-acetylglucosamine--N-acetylmuramyl-(pentapeptide) pyrophosphoryl-undecaprenol N-acetylglucosamine transferase of Alteromonas mediterranea (strain DSM 17117 / CIP 110805 / LMG 28347 / Deep ecotype).